The sequence spans 530 residues: UDP-glucuronosyltransferase 2A3 (530 aa).

Residues 1-23 (MAPGKLASAVLLLLLCCAGSGFC) form the signal peptide. Topologically, residues 24-494 (GKVLVWPCEM…SWFQYHSLDV (471 aa)) are extracellular. The N-linked (GlcNAc...) asparagine glycan is linked to Asn316. The helical transmembrane segment at 495–515 (IGFLLACVASAILLVTKCCLF) threads the bilayer. Residues 516-530 (SFQNFIKIGKRIKKE) lie on the Cytoplasmic side of the membrane.

The protein belongs to the UDP-glycosyltransferase family. Specifically expressed in liver and small intestine.

It localises to the membrane. It carries out the reaction glucuronate acceptor + UDP-alpha-D-glucuronate = acceptor beta-D-glucuronoside + UDP + H(+). In terms of biological role, UDP-glucuronosyltransferases catalyze phase II biotransformation reactions in which lipophilic substrates are conjugated with glucuronic acid to increase water solubility and enhance excretion. They are of major importance in the conjugation and subsequent elimination of potentially toxic xenobiotics and endogenous compounds. The sequence is that of UDP-glucuronosyltransferase 2A3 (UGT2A3) from Cavia porcellus (Guinea pig).